We begin with the raw amino-acid sequence, 510 residues long: Propionyl-CoA carboxylase beta chain (510 aa).

The CoA carboxyltransferase N-terminal domain maps to 1–257 (MKDILEQLED…NNREKPPVRP (257 aa)). The interval 1-504 (MKDILEQLED…NKSVQMPWKK (504 aa)) is carboxyltransferase. The CoA carboxyltransferase C-terminal domain occupies 261–504 (DPDRIEPSLD…NKSVQMPWKK (244 aa)). Positions 292 to 325 (DEGDFYEIQEEFAKNIITGFIRLEGRTVGVVANQ) are acyl-CoA binding.

It belongs to the AccD/PCCB family. As to quaternary structure, the holoenzyme is a dodecamer composed of 6 PccA/alpha subunits and 6 PccB/beta subunits.

The catalysed reaction is propanoyl-CoA + hydrogencarbonate + ATP = (S)-methylmalonyl-CoA + ADP + phosphate + H(+). The protein operates within metabolic intermediate metabolism; propanoyl-CoA degradation; succinyl-CoA from propanoyl-CoA: step 1/3. In terms of biological role, this is one of the 2 subunits of the biotin-dependent propionyl-CoA carboxylase (PCC), the enzyme catalyzing the carboxylation of propionyl-CoA/propanoyl-CoA to D-methylmalonyl-CoA/(S)-methylmalonyl-CoA. Within the holoenzyme, the alpha subunit catalyzes the ATP-dependent carboxylation of the biotin carried by the biotin carboxyl carrier (BCC) domain, while the beta subunit then tranfers the carboxyl group from carboxylated biotin to propionyl-CoA. This Roseobacter denitrificans (strain ATCC 33942 / OCh 114) (Erythrobacter sp. (strain OCh 114)) protein is Propionyl-CoA carboxylase beta chain.